We begin with the raw amino-acid sequence, 338 residues long: D-erythrose-4-phosphate dehydrogenase (338 aa).

12–13 (RI) lines the NAD(+) pocket. Substrate is bound by residues 154-156 (SCT), Arg-200, 213-214 (TK), and Arg-236. The active-site Nucleophile is the Cys-155. Asn-318 provides a ligand contact to NAD(+).

It belongs to the glyceraldehyde-3-phosphate dehydrogenase family. Epd subfamily. In terms of assembly, homotetramer.

The protein resides in the cytoplasm. The enzyme catalyses D-erythrose 4-phosphate + NAD(+) + H2O = 4-phospho-D-erythronate + NADH + 2 H(+). The protein operates within cofactor biosynthesis; pyridoxine 5'-phosphate biosynthesis; pyridoxine 5'-phosphate from D-erythrose 4-phosphate: step 1/5. Functionally, catalyzes the NAD-dependent conversion of D-erythrose 4-phosphate to 4-phosphoerythronate. In Pectobacterium atrosepticum (strain SCRI 1043 / ATCC BAA-672) (Erwinia carotovora subsp. atroseptica), this protein is D-erythrose-4-phosphate dehydrogenase.